Here is a 359-residue protein sequence, read N- to C-terminus: Proton-coupled zinc antiporter SLC30A2 (359 aa).

Residues 1-56 are Cytoplasmic-facing; the sequence is MASRSFFGALWKSEASRIPPVNLPSVELAVQSNHYCHAQKDSGSHPNSEKQRARRK. A Mitochondrial localization signal motif is present at residues 34-37; it reads HYCH. Residue Cys-36 participates in Zn(2+) binding. Residues 57 to 77 form a helical membrane-spanning segment; sequence LYVASAICLVFMIGEIIGGYL. The Lumenal segment spans residues 78–86; it reads AQSLAIMTD. The chain crosses the membrane as a helical span at residues 87–107; that stretch reads AAHLLTDFASMLISLFSLWVS. Zn(2+) contacts are provided by His-89 and Asp-93. At 108-123 the chain is on the cytoplasmic side; the sequence is SRPATKTMNFGWQRAE. Residues 124 to 144 traverse the membrane as a helical segment; that stretch reads ILGALLSVLSIWVVTGVLVYL. The Lumenal portion of the chain corresponds to 145 to 159; the sequence is AVQRLISGDYEIKGD. Residues 160 to 180 form a helical membrane-spanning segment; that stretch reads TMLITSGCAVAVNIIMGLALH. Over 181–207 the chain is Cytoplasmic; that stretch reads QSGHGHSHGHSHEDSSQQQQNPSVRAA. The helical transmembrane segment at 208 to 228 threads the bilayer; the sequence is FIHVVGDLLQSVGVLVAAYII. The Zn(2+) site is built by His-210 and Asp-214. Over 229 to 236 the chain is Lumenal; the sequence is YFKPEYKY. Residues 237 to 257 traverse the membrane as a helical segment; the sequence is VDPICTFLFSILVLGTTLTIL. Residues 258-291 are Cytoplasmic-facing; the sequence is RDVILVLMEGTPKGVDFTTVKNLLLSVDGVEALH. A Lysosomal targeting motif motif is present at residues 281-282; that stretch reads LL. Ser-283 carries the phosphoserine modification. The Zn(2+) site is built by His-291, His-308, and Glu-342. The helical transmembrane segment at 292 to 312 threads the bilayer; that stretch reads SLHIWALTVAQPVLSVHIAIA. The Lumenal segment spans residues 313 to 359; sequence QNVDAQAVLKVARDRLQGKFNFHTMTIQIESYSEDMKSCQECQGPSE.

Belongs to the cation diffusion facilitator (CDF) transporter (TC 2.A.4) family. SLC30A subfamily. Homodimer. Interacts (via lysosomal targeting motif) with AP3D1; in AP-3-mediated transport to lysosomes. Interacts with TMEM163. Post-translationally, phosphorylated at Ser-283. Phosphorylation at Ser-283 prevents localization to lysosomes. Dephosphorylation of Ser-283 which triggers localization to lysosomes, accumulation of zinc into lysosomes and lysosomal-mediated cell death is induced by TNF-alpha. As to expression, detected in intestine, kidney, seminal vesicles and testis.

It is found in the cytoplasmic vesicle. Its subcellular location is the secretory vesicle membrane. It localises to the zymogen granule membrane. The protein resides in the endosome membrane. The protein localises to the lysosome membrane. It is found in the mitochondrion inner membrane. The enzyme catalyses Zn(2+)(in) + 2 H(+)(out) = Zn(2+)(out) + 2 H(+)(in). Functionally, electroneutral proton-coupled antiporter concentrating zinc ions into a variety of intracellular organelles including endosomes, zymogen granules and mitochondria. Thereby, plays a crucial role in cellular zinc homeostasis to confer upon cells protection against its potential cytotoxicity. Regulates the zinc concentration of milk, through the transport of zinc ions into secretory vesicles of mammary cells. By concentrating zinc ions into lysosomes participates to lysosomal-mediated cell death during early mammary gland involution. The protein is Proton-coupled zinc antiporter SLC30A2 of Rattus norvegicus (Rat).